The following is a 401-amino-acid chain: Phosphoglycerate kinase (401 aa).

Substrate-binding positions include 26–28 (DFN), arginine 41, 64–67 (HLGK), arginine 125, and arginine 158. ATP contacts are provided by residues lysine 209, glycine 300, glutamate 331, and 357–360 (GGDS).

Belongs to the phosphoglycerate kinase family. In terms of assembly, monomer.

The protein localises to the cytoplasm. It carries out the reaction (2R)-3-phosphoglycerate + ATP = (2R)-3-phospho-glyceroyl phosphate + ADP. The protein operates within carbohydrate degradation; glycolysis; pyruvate from D-glyceraldehyde 3-phosphate: step 2/5. This is Phosphoglycerate kinase from Clostridium tetani (strain Massachusetts / E88).